We begin with the raw amino-acid sequence, 112 residues long: Large ribosomal subunit protein uL22 (112 aa).

Belongs to the universal ribosomal protein uL22 family. As to quaternary structure, part of the 50S ribosomal subunit.

This protein binds specifically to 23S rRNA; its binding is stimulated by other ribosomal proteins, e.g. L4, L17, and L20. It is important during the early stages of 50S assembly. It makes multiple contacts with different domains of the 23S rRNA in the assembled 50S subunit and ribosome. Functionally, the globular domain of the protein is located near the polypeptide exit tunnel on the outside of the subunit, while an extended beta-hairpin is found that lines the wall of the exit tunnel in the center of the 70S ribosome. In Anaplasma marginale (strain Florida), this protein is Large ribosomal subunit protein uL22.